A 964-amino-acid chain; its full sequence is Iron-responsive element-binding protein 2 (964 aa).

3 residues coordinate [4Fe-4S] cluster: cysteine 513, cysteine 579, and cysteine 582.

It belongs to the aconitase/IPM isomerase family. Interacts with RBCK1 only in iron-rich conditions. Interacts (when associated with the 4Fe-4S) with FBXL5. Interacts with CIAO1 and CIAO2A. Requires [4Fe-4S] cluster as cofactor. Post-translationally, ubiquitinated and degraded by the proteasome in presence of high level of iron and oxygen. Ubiquitinated by a SCF complex containing FBXL5. Upon iron and oxygen depletion FBXL5 is degraded, preventing ubiquitination and allowing its RNA-binding activity.

It is found in the cytoplasm. Its function is as follows. RNA-binding protein that binds to iron-responsive elements (IRES), which are stem-loop structures found in the 5'-UTR of ferritin, and delta aminolevulinic acid synthase mRNAs, and in the 3'-UTR of transferrin receptor mRNA. Binding to the IRE element in ferritin results in the repression of its mRNA translation. Binding of the protein to the transferrin receptor mRNA inhibits the degradation of this otherwise rapidly degraded mRNA. The polypeptide is Iron-responsive element-binding protein 2 (IREB2) (Sus scrofa (Pig)).